Reading from the N-terminus, the 491-residue chain is Cholesterol 22-monohydroxylase CYP90B51 (491 aa).

A helical membrane pass occupies residues 6–26; that stretch reads ITFYCLSSILSVLLIFIFILI. Heme is bound at residue C437.

Belongs to the cytochrome P450 family. Mainly expressed in leaves and seed pods and, to a lower extent, in flowers and stems.

It localises to the membrane. It carries out the reaction cholesterol + reduced [NADPH--hemoprotein reductase] + O2 = (22S)-22-hydroxycholesterol + oxidized [NADPH--hemoprotein reductase] + H2O + H(+). The protein operates within steroid metabolism; cholesterol metabolism. Its function is as follows. Canonical brassinosteroid (BR)-biosynthetic enzyme capable of converting cholesterol to 22S-hydroxycholesterol via sterol-C22 hydroxylation. This is Cholesterol 22-monohydroxylase CYP90B51 from Trigonella foenum-graecum (Fenugreek).